The sequence spans 131 residues: Holo-[acyl-carrier-protein] synthase (131 aa).

Asp-8 and Glu-59 together coordinate Mg(2+).

It belongs to the P-Pant transferase superfamily. AcpS family. The cofactor is Mg(2+).

The protein localises to the cytoplasm. The catalysed reaction is apo-[ACP] + CoA = holo-[ACP] + adenosine 3',5'-bisphosphate + H(+). In terms of biological role, transfers the 4'-phosphopantetheine moiety from coenzyme A to a Ser of acyl-carrier-protein. The sequence is that of Holo-[acyl-carrier-protein] synthase from Rickettsia africae (strain ESF-5).